We begin with the raw amino-acid sequence, 285 residues long: 2-dehydro-3-deoxyphosphooctonate aldolase (285 aa).

Belongs to the KdsA family.

It is found in the cytoplasm. It catalyses the reaction D-arabinose 5-phosphate + phosphoenolpyruvate + H2O = 3-deoxy-alpha-D-manno-2-octulosonate-8-phosphate + phosphate. It participates in carbohydrate biosynthesis; 3-deoxy-D-manno-octulosonate biosynthesis; 3-deoxy-D-manno-octulosonate from D-ribulose 5-phosphate: step 2/3. The protein operates within bacterial outer membrane biogenesis; lipopolysaccharide biosynthesis. The sequence is that of 2-dehydro-3-deoxyphosphooctonate aldolase from Polaromonas naphthalenivorans (strain CJ2).